We begin with the raw amino-acid sequence, 81 residues long: Small ribosomal subunit protein bS16 (81 aa).

Belongs to the bacterial ribosomal protein bS16 family.

This Neisseria gonorrhoeae (strain ATCC 700825 / FA 1090) protein is Small ribosomal subunit protein bS16.